Consider the following 157-residue polypeptide: D-aminoacyl-tRNA deacylase (157 aa).

Residues Gly-137–Pro-138 carry the Gly-cisPro motif, important for rejection of L-amino acids motif.

It belongs to the DTD family. Homodimer.

Its subcellular location is the cytoplasm. The catalysed reaction is glycyl-tRNA(Ala) + H2O = tRNA(Ala) + glycine + H(+). The enzyme catalyses a D-aminoacyl-tRNA + H2O = a tRNA + a D-alpha-amino acid + H(+). Its function is as follows. An aminoacyl-tRNA editing enzyme that deacylates mischarged D-aminoacyl-tRNAs. Also deacylates mischarged glycyl-tRNA(Ala), protecting cells against glycine mischarging by AlaRS. Acts via tRNA-based rather than protein-based catalysis; rejects L-amino acids rather than detecting D-amino acids in the active site. By recycling D-aminoacyl-tRNA to D-amino acids and free tRNA molecules, this enzyme counteracts the toxicity associated with the formation of D-aminoacyl-tRNA entities in vivo and helps enforce protein L-homochirality. This Roseiflexus castenholzii (strain DSM 13941 / HLO8) protein is D-aminoacyl-tRNA deacylase.